Consider the following 317-residue polypeptide: Transaldolase 2 (317 aa).

Lys132 serves as the catalytic Schiff-base intermediate with substrate.

Belongs to the transaldolase family. Type 1 subfamily. In terms of assembly, homodimer.

It is found in the cytoplasm. It catalyses the reaction D-sedoheptulose 7-phosphate + D-glyceraldehyde 3-phosphate = D-erythrose 4-phosphate + beta-D-fructose 6-phosphate. It participates in carbohydrate degradation; pentose phosphate pathway; D-glyceraldehyde 3-phosphate and beta-D-fructose 6-phosphate from D-ribose 5-phosphate and D-xylulose 5-phosphate (non-oxidative stage): step 2/3. Transaldolase is important for the balance of metabolites in the pentose-phosphate pathway. The polypeptide is Transaldolase 2 (Pectobacterium atrosepticum (strain SCRI 1043 / ATCC BAA-672) (Erwinia carotovora subsp. atroseptica)).